We begin with the raw amino-acid sequence, 141 residues long: Large ribosomal subunit protein uL11 (141 aa).

It belongs to the universal ribosomal protein uL11 family. Part of the ribosomal stalk of the 50S ribosomal subunit. Interacts with L10 and the large rRNA to form the base of the stalk. L10 forms an elongated spine to which L12 dimers bind in a sequential fashion forming a multimeric L10(L12)X complex. Post-translationally, one or more lysine residues are methylated.

Forms part of the ribosomal stalk which helps the ribosome interact with GTP-bound translation factors. The sequence is that of Large ribosomal subunit protein uL11 from Lactococcus lactis subsp. cremoris (strain MG1363).